A 34-amino-acid polypeptide reads, in one-letter code: DDIT3 upstream open reading frame protein (34 aa).

As to quaternary structure, interacts with DDIT3 (isoform 1).

Its subcellular location is the nucleus. The protein resides in the cytoplasm. Its function is as follows. Product of the upstream open reading frame (uORF) of DDIT3/CHOP that is specifically produced in absence of stress, thereby preventing translation of downstream stress effector DDIT3/CHOP. This chain is DDIT3 upstream open reading frame protein, found in Homo sapiens (Human).